The sequence spans 283 residues: UPF0276 protein Anae109_1558 (283 aa).

It belongs to the UPF0276 family.

The polypeptide is UPF0276 protein Anae109_1558 (Anaeromyxobacter sp. (strain Fw109-5)).